The following is a 274-amino-acid chain: Large ribosomal subunit protein uL2cz/uL2cy (274 aa).

Disordered stretches follow at residues 1-25 (MAIHLYKTSTPSTRNGAVDSQVKSN) and 223-274 (MNPV…RRTK).

It belongs to the universal ribosomal protein uL2 family. In terms of assembly, part of the 50S ribosomal subunit.

The protein resides in the plastid. The protein localises to the chloroplast. The polypeptide is Large ribosomal subunit protein uL2cz/uL2cy (rpl2-A) (Citrus sinensis (Sweet orange)).